A 411-amino-acid polypeptide reads, in one-letter code: Imidazolonepropionase (411 aa).

Fe(3+) contacts are provided by His-78 and His-80. Zn(2+) contacts are provided by His-78 and His-80. Arg-87, Tyr-150, and His-183 together coordinate 4-imidazolone-5-propanoate. Tyr-150 lines the N-formimidoyl-L-glutamate pocket. His-248 is a Fe(3+) binding site. His-248 lines the Zn(2+) pocket. 4-imidazolone-5-propanoate is bound at residue Gln-251. Asp-322 contributes to the Fe(3+) binding site. Zn(2+) is bound at residue Asp-322. 2 residues coordinate N-formimidoyl-L-glutamate: Asn-324 and Gly-326. Ser-327 is a binding site for 4-imidazolone-5-propanoate.

It belongs to the metallo-dependent hydrolases superfamily. HutI family. The cofactor is Zn(2+). Requires Fe(3+) as cofactor.

It is found in the cytoplasm. The catalysed reaction is 4-imidazolone-5-propanoate + H2O = N-formimidoyl-L-glutamate. It participates in amino-acid degradation; L-histidine degradation into L-glutamate; N-formimidoyl-L-glutamate from L-histidine: step 3/3. Functionally, catalyzes the hydrolytic cleavage of the carbon-nitrogen bond in imidazolone-5-propanoate to yield N-formimidoyl-L-glutamate. It is the third step in the universal histidine degradation pathway. This chain is Imidazolonepropionase, found in Christiangramia forsetii (strain DSM 17595 / CGMCC 1.15422 / KT0803) (Gramella forsetii).